The chain runs to 198 residues: Small ribosomal subunit protein uS4 (198 aa).

The interval 26-45 (LKKRPYAPGQHGQRRSKLSN) is disordered. In terms of domain architecture, S4 RNA-binding spans 91-154 (SRLDNVVYRL…KNLTIVKEAL (64 aa)).

Belongs to the universal ribosomal protein uS4 family. As to quaternary structure, part of the 30S ribosomal subunit. Contacts protein S5. The interaction surface between S4 and S5 is involved in control of translational fidelity.

Its function is as follows. One of the primary rRNA binding proteins, it binds directly to 16S rRNA where it nucleates assembly of the body of the 30S subunit. Functionally, with S5 and S12 plays an important role in translational accuracy. The polypeptide is Small ribosomal subunit protein uS4 (Acholeplasma laidlawii (strain PG-8A)).